Consider the following 1318-residue polypeptide: DNA-directed RNA polymerase subunit beta' (1318 aa).

4 residues coordinate Zn(2+): Cys221, Cys295, Cys302, and Cys305.

This sequence belongs to the RNA polymerase beta' chain family. RpoC2 subfamily. As to quaternary structure, in cyanobacteria the RNAP catalytic core is composed of 2 alpha, 1 beta, 1 beta', 1 gamma and 1 omega subunit. When a sigma factor is associated with the core the holoenzyme is formed, which can initiate transcription. Zn(2+) serves as cofactor.

It catalyses the reaction RNA(n) + a ribonucleoside 5'-triphosphate = RNA(n+1) + diphosphate. In terms of biological role, DNA-dependent RNA polymerase catalyzes the transcription of DNA into RNA using the four ribonucleoside triphosphates as substrates. The chain is DNA-directed RNA polymerase subunit beta' from Synechococcus sp. (strain ATCC 27144 / PCC 6301 / SAUG 1402/1) (Anacystis nidulans).